A 114-amino-acid polypeptide reads, in one-letter code: Protein ORF3 (114 aa).

Hydrophobic stretches follow at residues 6–24 (WALG…CCSR) and 33–53 (AVVG…GLIL). The segment at 28-68 (VSRLAAVVGGAAAVPAVVSGVTGLILSPSQSPIFIQPTPSP) is interaction with host HPX. The tract at residues 48–72 (VTGLILSPSQSPIFIQPTPSPRMSP) is interaction with the capsid protein. Serine 71 is modified (phosphoserine; by host). The segment at 72–114 (PLRPGLDLVFANPSDHSAPLGATRPSAPPLPHVVDLPQLGPRR) is homodimerization, and interaction with host AMBP/bikunin. The tract at residues 85–114 (SDHSAPLGATRPSAPPLPHVVDLPQLGPRR) is disordered. Residues 95 to 104 (RPSAPPLPHV) form an interaction with host SRC, HCK, FYN, PIK3R3 and GRB2 region. The short motif at 96–99 (PSAP) is the PTAP/PSAP motif element.

Belongs to the hepevirus ORF3 protein family. Forms homooligomers. Interacts with host SRC, HCK, FYN, PIK3R3 and GRB2 (via SH3 domain); binding does not activate the kinases. Interacts with host AMBP/bikunin and AMBP/alpha-1-microglobulin peptides. Interacts with host HPX/hemopexin. Interacts (when phosphorylated) with capsid protein ORF2. Interacts with host TSG101; this interaction plays a role in viral release from the host cell. Interacts with host SIRPA; this interaction down-regulates the phosphorylation of host IRF3. Post-translationally, palmitoylated in the N-terminus.

It localises to the host endoplasmic reticulum membrane. The protein localises to the host cytoplasm. It is found in the host cytoskeleton. Its subcellular location is the virion. The protein resides in the host cell membrane. Functionally, small multifunctional phosphoprotein involved in virion morphogenesis, egress and counteracting host innate immunity. Plays critical roles in the final steps of viral release by interacting with host TSG101, a member of the vacuolar protein-sorting pathway and using other cellular host proteins involved in vesicle formation pathway. Also acts as a viroporin and forms ion conductive pores allowing viral particle release. Impairs the generation of type I interferon by down-regulating host TLR3 and TLR7 as well as their downstream signaling pathways. Down-regulates the phosphorylation of host IRF3 via the interaction with host SIRP-alpha, thereby inhibiting IFN-I expression. Interacts with host microtubules. In Hepatitis E virus genotype 1 (isolate Human/India/Hyderabad) (HEV-1), this protein is Protein ORF3.